We begin with the raw amino-acid sequence, 211 residues long: Nucleoside triphosphate pyrophosphatase (211 aa).

Aspartate 75 serves as the catalytic Proton acceptor.

The protein belongs to the Maf family. A divalent metal cation is required as a cofactor.

The protein resides in the cytoplasm. The enzyme catalyses a ribonucleoside 5'-triphosphate + H2O = a ribonucleoside 5'-phosphate + diphosphate + H(+). It carries out the reaction a 2'-deoxyribonucleoside 5'-triphosphate + H2O = a 2'-deoxyribonucleoside 5'-phosphate + diphosphate + H(+). Functionally, nucleoside triphosphate pyrophosphatase. May have a dual role in cell division arrest and in preventing the incorporation of modified nucleotides into cellular nucleic acids. The sequence is that of Nucleoside triphosphate pyrophosphatase from Prochlorococcus marinus (strain NATL1A).